A 255-amino-acid chain; its full sequence is tRNA pseudouridine synthase B (255 aa).

Asp52 serves as the catalytic Nucleophile. Tyr80, Tyr183, and Leu204 together coordinate substrate.

Belongs to the pseudouridine synthase TruB family. Type 1 subfamily.

It carries out the reaction uridine(55) in tRNA = pseudouridine(55) in tRNA. Functionally, responsible for synthesis of pseudouridine from uracil-55 in the psi GC loop of transfer RNAs. This is tRNA pseudouridine synthase B from Blochmanniella floridana.